The primary structure comprises 155 residues: uncharacterized protein (155 aa).

5 helical membrane-spanning segments follow: residues 4-24 (IVGA…AGYL), 46-66 (AIGI…AIVY), 77-97 (FWFT…FQFT), 101-121 (LLAA…LLII), and 130-150 (SYLL…SFTI).

The protein belongs to the TspO/BZRP family.

The protein localises to the cell membrane. This is an uncharacterized protein from Bacillus subtilis (strain 168).